Reading from the N-terminus, the 837-residue chain is Putative outer membrane protein assembly factor TP_0326 (837 aa).

A signal peptide spans 1–21 (MLKKASAFLIASCCVMSLAWA). The Periplasmic segment spans residues 22–433 (QANDNWYEGK…ILNVEEQSTA (412 aa)). POTRA domains follow at residues 31–105 (KPIS…VKER), 106–182 (PSVK…IQEG), 185–273 (TVVS…VVEG), 276–354 (YRYG…VVER), and 357–430 (SHVE…VEEQ). A beta stranded membrane pass occupies residues 434–442 (NVQFGVTFS). Residues 443-450 (GVGEAGTF) lie on the Extracellular; loop L1 side of the membrane. The beta stranded transmembrane segment at 451 to 461 (PLSLFCQWEEK) threads the bilayer. At 462–468 (NFLGKGN) the chain is on the periplasmic side. Residues 469 to 476 (EISVNATL) traverse the membrane as a beta stranded segment. The Extracellular; loop L2 segment spans residues 477–478 (GS). The beta stranded transmembrane segment at 479–489 (EAQSLKLGYVE) threads the bilayer. The Periplasmic portion of the chain corresponds to 490 to 499 (RWFLGSPLTV). A beta stranded membrane pass occupies residues 500–520 (GFDFELTHKNLFVYRAGSYGN). The Extracellular; loop L3 segment spans residues 521–530 (GLPHPYTSRE). Residues 531–543 (QWASSPGLAESFR) traverse the membrane as a beta stranded segment. At 544 to 554 (LKYSRFESAIG) the chain is on the periplasmic side. The chain crosses the membrane as a beta stranded span at residues 555-568 (AHTGYQWYPRYAVI). Residues 569–601 (RVNGGVDFRVVKNFYDKDNNQPFDLTVKEQLNW) lie on the Extracellular; loop L4 side of the membrane. The chain crosses the membrane as a beta stranded span at residues 602-615 (TSINSFWTSVSFDG). The Periplasmic segment spans residues 616–623 (RDFAYDPS). A beta stranded membrane pass occupies residues 624 to 636 (SGWFLGQRCTFNG). Over 637 to 644 (LVPFLEKE) the chain is Extracellular; loop L5. Residues 645 to 658 (HSFRSDTKAEFYVT) form a beta stranded membrane-spanning segment. Residues 659 to 667 (LLNYPVSAV) are Periplasmic-facing. Residues 668–682 (WNLKFVLAFYTGVSV) traverse the membrane as a beta stranded segment. The Extracellular; loop L6 portion of the chain corresponds to 683-724 (QTYYGRRKSENGKGNGVRSGALVIDGVLVGRGWSEDAKKNTG). The chain crosses the membrane as a beta stranded span at residues 725–736 (DLLLHHWIEFRW). At 737–741 (PLAHG) the chain is on the periplasmic side. Residues 742 to 756 (IVSFDFFFDAAMVYN) traverse the membrane as a beta stranded segment. The Extracellular; loop L7 segment spans residues 757 to 786 (IESQSPNGSSSASSSSSSSSSSSRTTSSEG). Residues 761–785 (SPNGSSSASSSSSSSSSSSRTTSSE) are disordered. The segment covering 765 to 784 (SSSASSSSSSSSSSSRTTSS) has biased composition (low complexity). The beta stranded transmembrane segment at 787 to 799 (LYKMSYGPGLRFT) threads the bilayer. Over 800–802 (LPQ) the chain is Periplasmic. Residues 803–814 (FPLKLAFANTFT) traverse the membrane as a beta stranded segment. The Extracellular; loop L8 portion of the chain corresponds to 815–824 (SPGGIPKTKK). The beta stranded transmembrane segment at 825–829 (NWNFV) threads the bilayer. The Periplasmic segment spans residues 830-837 (LSFTVNNL).

Belongs to the BamA family. As to quaternary structure, part of 2 complexes of about 239 and 164 kDa.

It is found in the cell outer membrane. Might be part of the outer membrane protein assembly complex, which is involved in assembly and insertion of beta-barrel proteins into the outer membrane. In terms of biological role, both rabbit immune serum and rabbit antiserum specific for extracytoplasmic loop L4 promote bacteria internalization by rabbit peritoneal macrophages. Pools of human syphilitic sera from the USA and Columbia recognize both the N-terminal POTRA-containing and C-terminal beta-barrel domains as well as loop L4, showing this protein stimulates the immune system in both humans and rabbits. The sequence is that of Putative outer membrane protein assembly factor TP_0326 (tp92) from Treponema pallidum (strain Nichols).